The sequence spans 466 residues: Asparagine--tRNA ligase (466 aa).

The protein belongs to the class-II aminoacyl-tRNA synthetase family. As to quaternary structure, homodimer.

The protein resides in the cytoplasm. The catalysed reaction is tRNA(Asn) + L-asparagine + ATP = L-asparaginyl-tRNA(Asn) + AMP + diphosphate + H(+). The protein is Asparagine--tRNA ligase of Xylella fastidiosa (strain Temecula1 / ATCC 700964).